The primary structure comprises 80 residues: Conotoxin SIVB (80 aa).

The N-terminal stretch at 1 to 21 is a signal peptide; the sequence is MGMRMMFTVFLSVVLATTVVS. A propeptide spanning residues 22–38 is cleaved from the precursor; it reads TPSDRASDGRNAAVHER. Q39 carries the post-translational modification Pyrrolidone carboxylic acid. O-linked (HexNAc...) serine glycosylation is present at S45. Residues P55, P60, P61, P69, P72, and P75 each carry the 4-hydroxyproline modification. The residue at position 75 (P75) is a Proline amide. A propeptide spanning residues 76–80 is cleaved from the precursor; that stretch reads GRRND.

It belongs to the conotoxin A superfamily. Contains 3 disulfide bonds. In terms of processing, O-linked glycan consists of Hex3-HexNAc2 pentasaccharide. In terms of tissue distribution, expressed by the venom duct.

The protein localises to the secreted. In terms of biological role, neurotoxin with probable activity on sodium channel. Induces intense repetitive firing of the frog neuromuscular junction, leading to a tetanic contracture in muscle fiber (spastic paralysis). In vivo, shows the same effect as the whole venom when injected on fish prey. This is Conotoxin SIVB from Conus striatus (Striated cone).